Here is a 593-residue protein sequence, read N- to C-terminus: Aspartate--tRNA(Asp/Asn) ligase (593 aa).

Residue Glu182 participates in L-aspartate binding. Residues Gln206–Lys209 form an aspartate region. An L-aspartate-binding site is contributed by Arg228. ATP contacts are provided by residues Arg228–Glu230 and Gln237. Residue His455 participates in L-aspartate binding. Glu489 is an ATP binding site. Arg496 provides a ligand contact to L-aspartate. Gly541 to Arg544 is a binding site for ATP.

It belongs to the class-II aminoacyl-tRNA synthetase family. Type 1 subfamily. In terms of assembly, homodimer.

Its subcellular location is the cytoplasm. It carries out the reaction tRNA(Asx) + L-aspartate + ATP = L-aspartyl-tRNA(Asx) + AMP + diphosphate. Its function is as follows. Aspartyl-tRNA synthetase with relaxed tRNA specificity since it is able to aspartylate not only its cognate tRNA(Asp) but also tRNA(Asn). Reaction proceeds in two steps: L-aspartate is first activated by ATP to form Asp-AMP and then transferred to the acceptor end of tRNA(Asp/Asn). The polypeptide is Aspartate--tRNA(Asp/Asn) ligase (Geotalea uraniireducens (strain Rf4) (Geobacter uraniireducens)).